We begin with the raw amino-acid sequence, 342 residues long: tRNA N6-adenosine threonylcarbamoyltransferase (342 aa).

The Fe cation site is built by His-111 and His-115. Substrate-binding positions include 134–138 (LVSGG), Asp-167, Gly-180, Asp-184, and Asn-273. Asp-298 is a Fe cation binding site.

The protein belongs to the KAE1 / TsaD family. It depends on Fe(2+) as a cofactor.

It localises to the cytoplasm. It carries out the reaction L-threonylcarbamoyladenylate + adenosine(37) in tRNA = N(6)-L-threonylcarbamoyladenosine(37) in tRNA + AMP + H(+). Its function is as follows. Required for the formation of a threonylcarbamoyl group on adenosine at position 37 (t(6)A37) in tRNAs that read codons beginning with adenine. Is involved in the transfer of the threonylcarbamoyl moiety of threonylcarbamoyl-AMP (TC-AMP) to the N6 group of A37, together with TsaE and TsaB. TsaD likely plays a direct catalytic role in this reaction. In Gloeobacter violaceus (strain ATCC 29082 / PCC 7421), this protein is tRNA N6-adenosine threonylcarbamoyltransferase.